The primary structure comprises 176 residues: Lipoprotein signal peptidase (176 aa).

4 helical membrane passes run 26-46 (LWLA…IVIV), 57-77 (VTGF…SFLA), 82-102 (WQRW…VWLL), and 111-131 (FCFA…DRVI). Residues D137 and D155 contribute to the active site. Residues 147–167 (HWPAFNVADCAITVGAVLLIV) form a helical membrane-spanning segment.

It belongs to the peptidase A8 family.

It localises to the cell inner membrane. It carries out the reaction Release of signal peptides from bacterial membrane prolipoproteins. Hydrolyzes -Xaa-Yaa-Zaa-|-(S,diacylglyceryl)Cys-, in which Xaa is hydrophobic (preferably Leu), and Yaa (Ala or Ser) and Zaa (Gly or Ala) have small, neutral side chains.. It functions in the pathway protein modification; lipoprotein biosynthesis (signal peptide cleavage). Its function is as follows. This protein specifically catalyzes the removal of signal peptides from prolipoproteins. The protein is Lipoprotein signal peptidase of Cupriavidus taiwanensis (strain DSM 17343 / BCRC 17206 / CCUG 44338 / CIP 107171 / LMG 19424 / R1) (Ralstonia taiwanensis (strain LMG 19424)).